We begin with the raw amino-acid sequence, 177 residues long: NADH-quinone oxidoreductase subunit B (177 aa).

The [4Fe-4S] cluster site is built by Cys56, Cys57, Cys121, and Cys151.

The protein belongs to the complex I 20 kDa subunit family. NDH-1 is composed of 14 different subunits. Subunits NuoB, C, D, E, F, and G constitute the peripheral sector of the complex. It depends on [4Fe-4S] cluster as a cofactor.

The protein resides in the cell inner membrane. The enzyme catalyses a quinone + NADH + 5 H(+)(in) = a quinol + NAD(+) + 4 H(+)(out). Its function is as follows. NDH-1 shuttles electrons from NADH, via FMN and iron-sulfur (Fe-S) centers, to quinones in the respiratory chain. Couples the redox reaction to proton translocation (for every two electrons transferred, four hydrogen ions are translocated across the cytoplasmic membrane), and thus conserves the redox energy in a proton gradient. The protein is NADH-quinone oxidoreductase subunit B of Ruegeria pomeroyi (strain ATCC 700808 / DSM 15171 / DSS-3) (Silicibacter pomeroyi).